The following is a 95-amino-acid chain: Integration host factor subunit beta (95 aa).

Residues 56–95 (RAPRTGRNPKTGETVELDGKHVPHFKPGKELRDRVNESIA) are disordered. Basic and acidic residues predominate over residues 72–95 (LDGKHVPHFKPGKELRDRVNESIA).

The protein belongs to the bacterial histone-like protein family. As to quaternary structure, heterodimer of an alpha and a beta chain.

Its function is as follows. This protein is one of the two subunits of integration host factor, a specific DNA-binding protein that functions in genetic recombination as well as in transcriptional and translational control. The chain is Integration host factor subunit beta from Pseudoalteromonas translucida (strain TAC 125).